The primary structure comprises 248 residues: DNA polymerase sliding clamp (248 aa).

This sequence belongs to the PCNA family. As to quaternary structure, homotrimer. The subunits circularize to form a toroid; DNA passes through its center. Replication factor C (RFC) is required to load the toroid on the DNA.

Functionally, sliding clamp subunit that acts as a moving platform for DNA processing. Responsible for tethering the catalytic subunit of DNA polymerase and other proteins to DNA during high-speed replication. The polypeptide is DNA polymerase sliding clamp (Nitrosopumilus maritimus (strain SCM1)).